Consider the following 206-residue polypeptide: ATP-dependent Clp protease proteolytic subunit 1 (206 aa).

The active-site Nucleophile is the S100. The active site involves H125.

Belongs to the peptidase S14 family. In terms of assembly, fourteen ClpP subunits assemble into 2 heptameric rings which stack back to back to give a disk-like structure with a central cavity, resembling the structure of eukaryotic proteasomes.

Its subcellular location is the cytoplasm. It carries out the reaction Hydrolysis of proteins to small peptides in the presence of ATP and magnesium. alpha-casein is the usual test substrate. In the absence of ATP, only oligopeptides shorter than five residues are hydrolyzed (such as succinyl-Leu-Tyr-|-NHMec, and Leu-Tyr-Leu-|-Tyr-Trp, in which cleavage of the -Tyr-|-Leu- and -Tyr-|-Trp bonds also occurs).. Cleaves peptides in various proteins in a process that requires ATP hydrolysis. Has a chymotrypsin-like activity. Plays a major role in the degradation of misfolded proteins. This is ATP-dependent Clp protease proteolytic subunit 1 from Myxococcus xanthus (strain DK1622).